The primary structure comprises 225 residues: Insulin-induced gene 2 protein (225 aa).

At 1–28 (MAEGETESPGPKKCGPYISSVTSQSVNL) the chain is on the cytoplasmic side. A helical transmembrane segment spans residues 29-51 (MIRGVVLFFIGVFLALVLNLLQI). Residues 52 to 70 (QRNVTLFPPDVIASIFSSA) are Lumenal-facing. A helical membrane pass occupies residues 71–88 (WWVPPCCGTASAVIGLLY). The Cytoplasmic portion of the chain corresponds to 89–103 (PCIDRHLGEPHKFKR). Residues 104-126 (EWSSVMRCVAVFVGINHASAKVD) traverse the membrane as a helical segment. Over 127-129 (FDN) the chain is Lumenal. Residues 130–148 (NIQLSLTLAALSIGLWWTF) form a helical membrane-spanning segment. Topologically, residues 149–153 (DRSRS) are cytoplasmic. Ser151 is modified (phosphoserine; by PCK1). A helical transmembrane segment spans residues 154 to 175 (GFGLGVGIAFLATVVTQLLVYN). At 176-189 (GVYQYTSPDFLYVR) the chain is on the lumenal side. A helical membrane pass occupies residues 190–207 (SWLPCIFFAGGITMGNIG). Topologically, residues 208–225 (RQLAMYECKVIAEKSHQE) are cytoplasmic. Position 215 is a cysteine sulfenic acid (-SOH); alternate (Cys215). Cys215 is covalently cross-linked (Glycyl cysteine thioester (Cys-Gly) (interchain with G-Cter in ubiquitin); alternate). Positions 219–225 (AEKSHQE) match the KxHxx motif.

It belongs to the INSIG family. Interacts with SCAP; interaction is direct and only takes place in the presence of sterols; it prevents interaction between SCAP and the coat protein complex II (COPII). Associates with the SCAP-SREBP complex (composed of SCAP and SREBF1/SREBP1 or SREBF2/SREBP2); association is mediated via its interaction with SCAP and only takes place in the presence of sterols. Interacts with RNF139. Interacts with RNF145. Phosphorylation at Ser-151 by PCK1 reduces binding to oxysterol, disrupting the interaction between INSIG2 and SCAP, thereby promoting nuclear translocation of SREBP proteins (SREBF1/SREBP1 or SREBF2/SREBP2) and subsequent transcription of downstream lipogenesis-related genes. Post-translationally, polyubiquitinated by AMFR/gp78 at Cys-215 in some tissues such as adipose tissues, undifferentiated myoblasts and liver, leading to its degradation. In differentiated myotubes, Cys-215 oxidation prevents ubiquitination at the same site, resulting in protein stabilization. In terms of processing, oxidized at Cys-215 in differentiated myotubes, preventing ubiquitination at the same site, and resulting in protein stabilization.

Its subcellular location is the endoplasmic reticulum membrane. Oxysterol-binding protein that mediates feedback control of cholesterol synthesis by controlling both endoplasmic reticulum to Golgi transport of SCAP and degradation of HMGCR. Acts as a negative regulator of cholesterol biosynthesis by mediating the retention of the SCAP-SREBP complex in the endoplasmic reticulum, thereby blocking the processing of sterol regulatory element-binding proteins (SREBPs) SREBF1/SREBP1 and SREBF2/SREBP2. Binds oxysterol, including 22-hydroxycholesterol, 24-hydroxycholesterol, 25-hydroxycholesterol and 27-hydroxycholesterol, regulating interaction with SCAP and retention of the SCAP-SREBP complex in the endoplasmic reticulum. In presence of oxysterol, interacts with SCAP, retaining the SCAP-SREBP complex in the endoplasmic reticulum, thereby preventing SCAP from escorting SREBF1/SREBP1 and SREBF2/SREBP2 to the Golgi. Sterol deprivation or phosphorylation by PCK1 reduce oxysterol-binding, disrupting the interaction between INSIG2 and SCAP, thereby promoting Golgi transport of the SCAP-SREBP complex, followed by processing and nuclear translocation of SREBF1/SREBP1 and SREBF2/SREBP2. Also regulates cholesterol synthesis by regulating degradation of HMGCR: initiates the sterol-mediated ubiquitin-mediated endoplasmic reticulum-associated degradation (ERAD) of HMGCR via recruitment of the reductase to the ubiquitin ligase RNF139. The chain is Insulin-induced gene 2 protein from Homo sapiens (Human).